Reading from the N-terminus, the 532-residue chain is Cytochrome P450 monooxygenase criE (532 aa).

Residues Val18–Leu38 traverse the membrane as a helical segment. Cys441 is a binding site for heme.

This sequence belongs to the cytochrome P450 family. Heme is required as a cofactor.

It is found in the membrane. The enzyme catalyses preechinulin + reduced [NADPH--hemoprotein reductase] + O2 = neoechinulin A + oxidized [NADPH--hemoprotein reductase] + 2 H2O + H(+). It functions in the pathway secondary metabolite biosynthesis. Its pathway is alkaloid biosynthesis. Cytochrome P450 monooxygenase; part of the gene cluster that mediates the biosynthesis of echinulin family alkaloid. The pathway begins with the biosynthesis of the cyclic dipeptide cyclo-L-Trp-L-Ala (cyclo-TA) by the NRPS criC via condensation of L-alanine and L-tryptophan. The prenyltransferase criA then catalyzes the first prenylation step, a reverse prenylation reaction at C2, to yield preechinulin. Preechinulin is the substrate of the cytochrome P450 monooxygenase criE that catalyzes the formation of the double bond between C10 and C11 to produce neoechulin A. The unique prenyltransferase criF functions as a competitive enzyme with criE for preechinulin metabolization and uses preechinulin for effective regiospecific prenylations. Preechinulin is prenylated by criF at C5 or C7. C7-prenylation leads to accumulation of tardioxopiperazine B without further modification by criF. In contrast, the C5-prenylated tardioxopiperazine A can be prenylated again by criF, predominantly at C7 to form echinulin or less frequently at C4 to give variecolorin L. CriF also accepts neoechilunin A to produce varlecolorin G (prenylation at C5) or isoechinulin A (prenylation at C7). CriF further converts isoechinulin A into dehydroechinulin. Moreover, a yet unidentified enzyme can also convert neoechilunin A into neoechilunin B by introducing a double bond between positions C14 and C17 and thus provides a further substrate to criF for C5 and C7 prenylation. The chain is Cytochrome P450 monooxygenase criE from Aspergillus cristatus (Chinese Fuzhuan brick tea-fermentation fungus).